Consider the following 198-residue polypeptide: MTTKYQAPLAAGWLIRAPSLLSPTQRHWLFRPGALTAGLRQLGKVQLRVVSEHAEGASLDEARAMLIAPGSPVWVREVLMSVDGIDSVPARSLTPLAASHGSWQGMRRLLTRPLADMLYHDRGVTRSPFVCRRLSSPLPFYRMALPPNHDGSAIWARRSVFWRHGQPLLVAECFLPDFWRKVTLGRAIPPLKAHDRRA.

Substrate-binding residues include arginine 76, leucine 114, and glutamate 172.

The protein belongs to the UbiC family.

Its subcellular location is the cytoplasm. It catalyses the reaction chorismate = 4-hydroxybenzoate + pyruvate. Its pathway is cofactor biosynthesis; ubiquinone biosynthesis. Removes the pyruvyl group from chorismate, with concomitant aromatization of the ring, to provide 4-hydroxybenzoate (4HB) for the ubiquinone pathway. The protein is Probable chorismate pyruvate-lyase of Bordetella avium (strain 197N).